The primary structure comprises 131 residues: MNPPFAKVSWATVTLLLLLLLLPPAVLSPGAAAQPLPDCCRQKTCSCRLYELLHGAGNHAAGILTLGKRRPGPPGLQGRLQRLLQASGNHAAGILTMGRRAGAEPAPRLCPGRRCLAAAASSVAPGGRSGI.

Residues 1 to 33 (MNPPFAKVSWATVTLLLLLLLLPPAVLSPGAAA) form the signal peptide. The residue at position 34 (Q34) is a Pyrrolidone carboxylic acid. 2 disulfide bridges follow: C39/C45 and C40/C47. Position 66 is a leucine amide (L66). At M97 the chain carries Methionine amide. Positions 98–131 (GRRAGAEPAPRLCPGRRCLAAAASSVAPGGRSGI) are cleaved as a propeptide — removed in mature form.

Belongs to the orexin family. In terms of processing, specific enzymatic cleavages at paired basic residues yield the different active peptides.

It localises to the rough endoplasmic reticulum. The protein resides in the cytoplasmic vesicle. It is found in the synapse. Functionally, neuropeptides that play a significant role in the regulation of food intake and sleep-wakefulness, possibly by coordinating the complex behavioral and physiologic responses of these complementary homeostatic functions. A broader role in the homeostatic regulation of energy metabolism, autonomic function, hormonal balance and the regulation of body fluids, is also suggested. Its function is as follows. Binds to orexin receptors HCRTR1/OX1R and HCRTR2/OX2R with a high affinity. Stimulates food intake. Modulates pituitary luteinizing hormone secretion in an ovarian steroid-dependent manner. Binds to orexin receptor HCRTR2/OX2R only. Stimulates food intake. Modulates pituitary luteinizing hormone secretion in an ovarian steroid-dependent manner. In Sus scrofa (Pig), this protein is Hypocretin neuropeptide precursor (HCRT).